Reading from the N-terminus, the 347-residue chain is Fructose-1,6-bisphosphatase class 1 (347 aa).

Glu107, Asp128, Leu130, and Asp131 together coordinate Mg(2+). Substrate-binding positions include 131 to 134 (DGSS), Asn224, Tyr257, and Lys286. Glu292 serves as a coordination point for Mg(2+).

This sequence belongs to the FBPase class 1 family. As to quaternary structure, homotetramer. Requires Mg(2+) as cofactor.

The protein resides in the cytoplasm. The enzyme catalyses beta-D-fructose 1,6-bisphosphate + H2O = beta-D-fructose 6-phosphate + phosphate. The protein operates within carbohydrate biosynthesis; gluconeogenesis. This Sorangium cellulosum (strain So ce56) (Polyangium cellulosum (strain So ce56)) protein is Fructose-1,6-bisphosphatase class 1.